A 228-amino-acid chain; its full sequence is Translin (228 aa).

The interval 86–90 is DNA/RNA binding; the sequence is RFHEH. Residues 177 to 198 form a leucine-zipper region; the sequence is LDSGFRLLNLKNDSLRKRYDGL. Residue Lys-187 is modified to N6-acetyllysine. Ser-190 carries the phosphoserine modification. Lys-199 is modified (N6-acetyllysine).

The protein belongs to the translin family. Ring-shaped heterooctamer of six TSN and two TSNAX subunits, DNA/RNA binding occurs inside the ring.

The protein localises to the cytoplasm. The protein resides in the nucleus. In terms of biological role, DNA-binding protein that specifically recognizes consensus sequences at the breakpoint junctions in chromosomal translocations, mostly involving immunoglobulin (Ig)/T-cell receptor gene segments. Seems to recognize single-stranded DNA ends generated by staggered breaks occurring at recombination hot spots. Its function is as follows. Exhibits both single-stranded and double-stranded endoribonuclease activity. May act as an activator of RNA-induced silencing complex (RISC) by facilitating endonucleolytic cleavage of the siRNA passenger strand. The sequence is that of Translin from Homo sapiens (Human).